The sequence spans 342 residues: Anthranilate phosphoribosyltransferase (342 aa).

5-phospho-alpha-D-ribose 1-diphosphate contacts are provided by residues Gly79, 82-83 (GD), Thr87, 89-92 (NVST), 107-115 (KHGNRSVSS), and Ser119. Residue Gly79 participates in anthranilate binding. Residue Ser91 participates in Mg(2+) binding. Asn110 is an anthranilate binding site. Arg165 is a binding site for anthranilate. 2 residues coordinate Mg(2+): Asp223 and Glu224.

This sequence belongs to the anthranilate phosphoribosyltransferase family. Homodimer. Mg(2+) is required as a cofactor.

The enzyme catalyses N-(5-phospho-beta-D-ribosyl)anthranilate + diphosphate = 5-phospho-alpha-D-ribose 1-diphosphate + anthranilate. The protein operates within amino-acid biosynthesis; L-tryptophan biosynthesis; L-tryptophan from chorismate: step 2/5. Functionally, catalyzes the transfer of the phosphoribosyl group of 5-phosphorylribose-1-pyrophosphate (PRPP) to anthranilate to yield N-(5'-phosphoribosyl)-anthranilate (PRA). The polypeptide is Anthranilate phosphoribosyltransferase (Aeromonas hydrophila subsp. hydrophila (strain ATCC 7966 / DSM 30187 / BCRC 13018 / CCUG 14551 / JCM 1027 / KCTC 2358 / NCIMB 9240 / NCTC 8049)).